The chain runs to 534 residues: Pentatricopeptide repeat-containing protein At5g59600 (534 aa).

PPR repeat units lie at residues 50–80 (LTRI…MPKR), 81–115 (DISG…GLKL), 116–150 (DAFI…SYES), 151–181 (DAFI…LGEQ), 182–216 (DLVV…GIKP), 217–251 (DVIT…GYKP), 252–286 (DVVS…GLYP), 287–321 (NSAT…GLED), 322–352 (HGFV…TPKK), 353–387 (TTVT…GEKL), 388–418 (DHLT…MQNK), and 424–454 (RLEH…MRME). The interval 459 to 534 (VWGALLAACR…FLGSSWVETV (76 aa)) is type E motif.

This sequence belongs to the PPR family. PCMP-E subfamily.

The sequence is that of Pentatricopeptide repeat-containing protein At5g59600 (PCMP-E1) from Arabidopsis thaliana (Mouse-ear cress).